A 725-amino-acid polypeptide reads, in one-letter code: Ribonuclease R (725 aa).

Residues 264–592 (RQDLTDLAFV…IHRLLWMHLF (329 aa)) form the RNB domain. The region spanning 644–725 (GKTFSGFISA…IQKRAILTLI (82 aa)) is the S1 motif domain.

Belongs to the RNR ribonuclease family. RNase R subfamily.

The protein localises to the cytoplasm. The enzyme catalyses Exonucleolytic cleavage in the 3'- to 5'-direction to yield nucleoside 5'-phosphates.. 3'-5' exoribonuclease that releases 5'-nucleoside monophosphates and is involved in maturation of structured RNAs. The chain is Ribonuclease R from Mycoplasma genitalium (strain ATCC 33530 / DSM 19775 / NCTC 10195 / G37) (Mycoplasmoides genitalium).